The sequence spans 70 residues: DNA-directed RNA polymerase subunit epsilon (70 aa).

It belongs to the RNA polymerase subunit epsilon family. In terms of assembly, RNAP is composed of a core of 2 alpha, a beta and a beta' subunit. The core is associated with a delta subunit, and at least one of epsilon or omega. When a sigma factor is associated with the core the holoenzyme is formed, which can initiate transcription.

The catalysed reaction is RNA(n) + a ribonucleoside 5'-triphosphate = RNA(n+1) + diphosphate. A non-essential component of RNA polymerase (RNAP). The protein is DNA-directed RNA polymerase subunit epsilon of Bacillus cereus (strain ZK / E33L).